The sequence spans 377 residues: Nuclear pore complex protein NUP54 (377 aa).

Over residues 1–18 (MFGTPSSSPSFGTPSSTP) the composition is skewed to low complexity. Residues 1 to 104 (MFGTPSSSPS…NTAQQQQQTP (104 aa)) are disordered. A run of 7 repeats spans residues 2-3 (FG), 11-12 (FG), 20-21 (FG), 27-28 (FG), 36-37 (FG), 49-50 (FG), and 87-88 (FG). The interval 2-88 (FGTPSSSPSF…FQQQPSSNFG (87 aa)) is 7 X 2 AA repeats of F-G. Residues 19–32 (AFGTSSPAFGTPSA) are compositionally biased toward polar residues. Positions 39–104 (PSNPSFSSGG…NTAQQQQQTP (66 aa)) are enriched in low complexity.

This sequence belongs to the NUP54 family. In terms of assembly, part of the nuclear pore complex (NPC). The NPC has an eight-fold symmetrical structure comprising a central transport channel and two rings, the cytoplasmic and nuclear rings, to which eight filaments are attached. The cytoplasmic filaments have loose ends, while the nuclear filaments are joined in a distal ring, forming a nuclear basket. NPCs are highly dynamic in configuration and composition, and can be devided in 3 subcomplexes, the NUP62 subcomplex, the NUP107-160 subcomplex and the NUP93 subcomplex, containing approximately 30 different nucleoporin proteins.

The protein resides in the nucleus envelope. It is found in the nucleus. It localises to the nuclear pore complex. This is Nuclear pore complex protein NUP54 from Arabidopsis thaliana (Mouse-ear cress).